The sequence spans 101 residues: MSLPRRAAHAAIRAYQLTLSGLVGRQCRHWPSCSAYADEAIQRHGLWAGGWMGLARICRCGPFGTHGIDLVCEALPEGAAWHRPWAYGRWRGVNAPAPLGE.

The protein belongs to the UPF0161 family.

It localises to the cell inner membrane. Could be involved in insertion of integral membrane proteins into the membrane. The sequence is that of Putative membrane protein insertion efficiency factor from Methylobacterium sp. (strain 4-46).